A 586-amino-acid polypeptide reads, in one-letter code: Serine/threonine-protein phosphatase 2A 56 kDa regulatory subunit delta isoform (586 aa).

A disordered region spans residues 1–80 (MSPSPSSSGK…QSSSRFNLSK (80 aa)). 6 repeat units span residues 21 to 22 (QP), 23 to 24 (QP), 25 to 26 (QP), 27 to 28 (QP), 29 to 30 (QP), and 31 to 32 (QP). Residues 21–36 (QPQPQPQPQPQPQSQP) are 8 X 2 AA approximate tandem repeats of Q-P. Residues 23 to 35 (QPQPQPQPQPQSQ) show a composition bias toward pro residues. The stretch at 33-34 (QS) is one 7; approximate repeat. Copy 8 of the repeat occupies 35-36 (QP). Positions 36 to 45 (PPSSNKRPSN) are enriched in low complexity. A Phosphothreonine modification is found at Thr-47. 3 positions are modified to phosphoserine: Ser-72, Ser-73, and Ser-74. An SH3-binding; class I motif is present at residues 507-514 (RAPPPLPP). The Nuclear localization signal signature appears at 532–549 (KRTVETEAVQMLKDIKKE). Residues Ser-557 and Ser-582 each carry the phosphoserine modification.

This sequence belongs to the phosphatase 2A regulatory subunit B56 family. In terms of assembly, PP2A consists of a common heterodimeric core enzyme, composed of a 36 kDa catalytic subunit (subunit C) and a 65 kDa constant regulatory subunit (PR65 or subunit A), that associates with a variety of regulatory subunits. Proteins that associate with the core dimer include three families of regulatory subunits B (the R2/B/PR55/B55, R3/B''/PR72/PR130/PR59 and R5/B'/B56 families), the 48 kDa variable regulatory subunit, viral proteins, and cell signaling molecules. Interacts with the PP2A A subunit PPP2R1A. Interacts with SGO1. Interacts with ADCY8. In terms of tissue distribution, highly expressed in brain.

It localises to the nucleus. Its function is as follows. The B regulatory subunit might modulate substrate selectivity and catalytic activity, and might also direct the localization of the catalytic enzyme to a particular subcellular compartment. The chain is Serine/threonine-protein phosphatase 2A 56 kDa regulatory subunit delta isoform (PPP2R5D) from Oryctolagus cuniculus (Rabbit).